A 497-amino-acid chain; its full sequence is Probable malate:quinone oxidoreductase (497 aa).

Belongs to the MQO family. FAD serves as cofactor.

The catalysed reaction is (S)-malate + a quinone = a quinol + oxaloacetate. It participates in carbohydrate metabolism; tricarboxylic acid cycle; oxaloacetate from (S)-malate (quinone route): step 1/1. This is Probable malate:quinone oxidoreductase from Rhodopseudomonas palustris (strain ATCC BAA-98 / CGA009).